Reading from the N-terminus, the 235-residue chain is MQQRGAAGSRGCALFPLLGVLFFQGVYIVFSLEIRADAHVRGYVGEKIKLKCTFKSTSDVTDKLTIDWTYRPPSSSHTVSIFHYQSFQYPTTAGTFRDRISWVGNVYKGDASISISNPTIKDNGTFSCAVKNPPDVHHNIPMTELTVTERGFGTMLSSVALLSILVFVPSAVVVALLLVRMGRKAAGLKKRSRSGYKKSSIEVSDDTDQEEEEACMARLCVRCAECLDSDYEETY.

Residues 1-31 form the signal peptide; sequence MQQRGAAGSRGCALFPLLGVLFFQGVYIVFS. The region spanning 32 to 148 is the Ig-like V-type domain; the sequence is LEIRADAHVR…NIPMTELTVT (117 aa). Residues 32–158 lie on the Extracellular side of the membrane; sequence LEIRADAHVR…ERGFGTMLSS (127 aa). The cysteines at positions 52 and 128 are disulfide-linked. N-linked (GlcNAc...) asparagine glycosylation is present at Asn-123. Residues 159-179 traverse the membrane as a helical segment; that stretch reads VALLSILVFVPSAVVVALLLV. The Cytoplasmic segment spans residues 180 to 235; sequence RMGRKAAGLKKRSRSGYKKSSIEVSDDTDQEEEEACMARLCVRCAECLDSDYEETY.

It belongs to the myelin P0 protein family.

The protein localises to the membrane. Functionally, mediates homophilic cell-cell adhesion. This is Myelin protein zero-like protein 3 (MPZL3) from Homo sapiens (Human).